The following is a 59-amino-acid chain: Large ribosomal subunit protein uL30 (59 aa).

Belongs to the universal ribosomal protein uL30 family. In terms of assembly, part of the 50S ribosomal subunit.

In Bacillus subtilis (strain 168), this protein is Large ribosomal subunit protein uL30.